The following is a 326-amino-acid chain: mRNA decay activator protein ZFP36 (326 aa).

The tract at residues 1–15 (MDLTAIYESLLSLSP) is necessary for nuclear export. Positions 1-100 (MDLTAIYESL…PTSPTATSTT (100 aa)) are necessary and sufficient for the association with mRNA decay enzymes and mRNA decay activation. Necessary for localization of ARE-containing mRNAs to processing bodies (PBs) regions lie at residues 1–174 (MDLT…DLAA) and 100–326 (TPSR…SVSE). The segment at 13 to 66 (LSPDVPVPSDHGGTESSPGWGSSGPWSLSPSDSSPSGVTSRLPGRSTSLVEGRS) is disordered. The span at 28-49 (SSPGWGSSGPWSLSPSDSSPSG) shows a compositional bias: low complexity. At serine 60 the chain carries Phosphoserine; by MAPKAPK2. Position 66 is a phosphoserine (serine 66). Residues 71 to 75 (PPPPG) form a P-P-P-P-G repeat. The disordered stretch occupies residues 78 to 102 (PLAPRLGPELSPSPTSPTATSTTPS). A phosphoserine mark is found at serine 88 and serine 90. Threonine 92 is modified (phosphothreonine). The residue at position 93 (serine 93) is a Phosphoserine. The necessary for nuclear localization stretch occupies residues 95–168 (TATSTTPSRY…GSRCHFIHNP (74 aa)). The interval 97–173 (TSTTPSRYKT…FIHNPSEDLA (77 aa)) is necessary for RNA-binding. 2 consecutive C3H1-type zinc fingers follow at residues 103–131 (RYKT…HGLG) and 141–169 (KYKT…HNPS). The interval 103–194 (RYKTELCRTF…ISFSGLPSGR (92 aa)) is necessary for interaction with PABPN1. Serine 169 is modified (phosphoserine). The tract at residues 174–326 (APGHPPVLRQ…PIFNRISVSE (153 aa)) is necessary for mRNA decay activation. Disordered stretches follow at residues 175–245 (PGHP…RRDP) and 273–292 (SVQS…SSLG). Serine 186 is modified (phosphoserine; by MAPKAPK2). Serine 197 bears the Phosphoserine mark. A P-P-P-P-G repeat occupies 198–202 (PPPPG). Positions 204 to 216 (AGPSLSSSSFSPS) are enriched in low complexity. The residue at position 218 (serine 218) is a Phosphoserine. One copy of the P-P-P-P-G repeat lies at 219–223 (PPPPG). The residue at position 228 (serine 228) is a Phosphoserine; by MAPK1; in vitro. 3 positions are modified to phosphoserine: serine 276, serine 296, and serine 323. Residues 312–326 (APRRLPIFNRISVSE) are interaction with CNOT1.

In terms of assembly, associates with cytoplasmic CCR4-NOT and PAN2-PAN3 deadenylase complexes to trigger ARE-containing mRNA deadenylation and decay processes. Part of a mRNA decay activation complex at least composed of poly(A)-specific exoribonucleases CNOT6, EXOSC2 and XRN1 and mRNA-decapping enzymes DCP1A and DCP2. Associates with the RNA exosome complex. Interacts (via phosphorylated form) with 14-3-3 proteins; these interactions promote exclusion of ZFP36 from cytoplasmic stress granules in response to arsenite treatment in a MAPKAPK2-dependent manner and does not prevent CCR4-NOT deadenylase complex recruitment or ZFP36-induced ARE-containing mRNA deadenylation and decay processes. Interacts with 14-3-3 proteins; these interactions occur in response to rapamycin in an Akt-dependent manner. Interacts with AGO2 and AGO4. Interacts (via C-terminus) with CNOT1; this interaction occurs in a RNA-independent manner and induces mRNA deadenylation. Interacts (via N-terminus) with CNOT6. Interacts with CNOT6L. Interacts (via C-terminus) with CNOT7; this interaction occurs in a RNA-independent manner, induces mRNA deadenylation and is inhibited in a phosphorylation MAPKAPK2-dependent manner. Interacts (via unphosphorylated form) with CNOT8; this interaction occurs in a RNA-independent manner and is inhibited in a phosphorylation MAPKAPK2-dependent manner. Interacts with DCP1A. Interacts (via N-terminus) with DCP2. Interacts with EDC3. Interacts (via N-terminus) with EXOSC2. Interacts with heat shock 70 kDa proteins. Interacts with KHSRP; this interaction increases upon cytokine-induced treatment. Interacts with MAP3K4; this interaction enhances the association with SH3KBP1/CIN85. Interacts with MAPKAPK2; this interaction occurs upon skeletal muscle satellite cell activation. Interacts with NCL. Interacts with NUP214; this interaction increases upon lipopolysaccharide (LPS) stimulation. Interacts with PABPC1; this interaction occurs in a RNA-dependent manner. Interacts (via hypophosphorylated form) with PABPN1 (via RRM domain and C-terminal arginine-rich region); this interaction occurs in the nucleus in a RNA-independent manner, decreases in presence of single-stranded poly(A) RNA-oligomer and in a p38 MAPK-dependent-manner and inhibits nuclear poly(A) tail synthesis. Interacts with PAN2. Interacts (via C3H1-type zinc finger domains) with PKM. Interacts (via C3H1-type zinc finger domains) with nuclear RNA poly(A) polymerase. Interacts with PPP2CA; this interaction occurs in LPS-stimulated cells and induces ZFP36 dephosphorylation, and hence may promote ARE-containing mRNAs decay. Interacts (via C-terminus) with PRR5L (via C-terminus); this interaction may accelerate ZFP36-mediated mRNA decay during stress. Interacts (via C-terminus) with SFN; this interaction occurs in a phosphorylation-dependent manner. Interacts (via extreme C-terminal region) with SH3KBP1/CIN85 (via SH3 domains); this interaction enhances MAP3K4-induced phosphorylation of ZFP36 at Ser-66 and Ser-93 and does not alter neither ZFP36 binding to ARE-containing transcripts nor TNF-alpha mRNA decay. Interacts with XRN1. Interacts (via C-terminus and Ser-186 phosphorylated form) with YWHAB; this interaction occurs in a p38/MAPKAPK2-dependent manner, increases cytoplasmic localization of ZFP36 and protects ZFP36 from Ser-186 dephosphorylation by serine/threonine phosphatase 2A, and hence may be crucial for stabilizing ARE-containing mRNAs. Interacts (via phosphorylated form) with YWHAE. Interacts (via C-terminus) with YWHAG; this interaction occurs in a phosphorylation-dependent manner. Interacts with YWHAH; this interaction occurs in a phosphorylation-dependent manner. Interacts with YWHAQ; this interaction occurs in a phosphorylation-dependent manner. Interacts with (via C-terminus) YWHAZ; this interaction occurs in a phosphorylation-dependent manner. Interacts (via P-P-P-P-G repeats) with GIGYF2; the interaction is direct. As to quaternary structure, (Microbial infection) Interacts (via C-terminus) with HTLV-1 TAX (via C-terminus); this interaction inhibits HTLV-1 TAX to transactivate viral long terminal repeat (LTR) promoter. In terms of processing, phosphorylated. Phosphorylation at serine and/or threonine residues occurs in a p38 MAPK- and MAPKAPK2-dependent manner. Phosphorylated by MAPKAPK2 at Ser-60 and Ser-186; phosphorylation increases its stability and cytoplasmic localization, promotes binding to 14-3-3 adapter proteins and inhibits the recruitment of cytoplasmic CCR4-NOT and PAN2-PAN3 deadenylase complexes to the mRNA decay machinery, thereby inhibiting ZFP36-induced ARE-containing mRNA deadenylation and decay processes. Phosphorylation by MAPKAPK2 does not impair ARE-containing RNA-binding. Phosphorylated in a MAPKAPK2- and p38 MAPK-dependent manner upon skeletal muscle satellite cell activation; this phosphorylation inhibits ZFP36-mediated mRNA decay activity, and hence stabilizes MYOD1 mRNA. Phosphorylated by MAPK1 upon mitogen stimulation. Phosphorylated at Ser-66 and Ser-93; these phosphorylations increase in a SH3KBP1-dependent manner. Phosphorylated at serine and threonine residues in a pyruvate kinase PKM- and p38 MAPK-dependent manner. Phosphorylation at Ser-60 may participate in the PKM-mediated degradation of ZFP36 in a p38 MAPK-dependent manner. Dephosphorylated by serine/threonine phosphatase 2A at Ser-186. Ubiquitinated; pyruvate kinase (PKM)-dependent ubiquitination leads to proteasomal degradation through a p38 MAPK signaling pathway. Expressed in both basal and suprabasal epidermal layers. Expressed in epidermal keratinocytes. Expressed strongly in mature dendritic cells. Expressed in immature dendritic cells (at protein level).

The protein localises to the nucleus. The protein resides in the cytoplasm. Its subcellular location is the cytoplasmic granule. It localises to the P-body. Its function is as follows. Zinc-finger RNA-binding protein that destabilizes several cytoplasmic AU-rich element (ARE)-containing mRNA transcripts by promoting their poly(A) tail removal or deadenylation, and hence provide a mechanism for attenuating protein synthesis. Acts as an 3'-untranslated region (UTR) ARE mRNA-binding adapter protein to communicate signaling events to the mRNA decay machinery. Recruits deadenylase CNOT7 (and probably the CCR4-NOT complex) via association with CNOT1, and hence promotes ARE-mediated mRNA deadenylation. Functions also by recruiting components of the cytoplasmic RNA decay machinery to the bound ARE-containing mRNAs. Self regulates by destabilizing its own mRNA. Binds to 3'-UTR ARE of numerous mRNAs and of its own mRNA. Plays a role in anti-inflammatory responses; suppresses tumor necrosis factor (TNF)-alpha production by stimulating ARE-mediated TNF-alpha mRNA decay and several other inflammatory ARE-containing mRNAs in interferon (IFN)- and/or lipopolysaccharide (LPS)-induced macrophages. Also plays a role in the regulation of dendritic cell maturation at the post-transcriptional level, and hence operates as part of a negative feedback loop to limit the inflammatory response. Promotes ARE-mediated mRNA decay of hypoxia-inducible factor HIF1A mRNA during the response of endothelial cells to hypoxia. Positively regulates early adipogenesis of preadipocytes by promoting ARE-mediated mRNA decay of immediate early genes (IEGs). Negatively regulates hematopoietic/erythroid cell differentiation by promoting ARE-mediated mRNA decay of the transcription factor STAT5B mRNA. Plays a role in maintaining skeletal muscle satellite cell quiescence by promoting ARE-mediated mRNA decay of the myogenic determination factor MYOD1 mRNA. Associates also with and regulates the expression of non-ARE-containing target mRNAs at the post-transcriptional level, such as MHC class I mRNAs. Participates in association with argonaute RISC catalytic components in the ARE-mediated mRNA decay mechanism; assists microRNA (miRNA) targeting ARE-containing mRNAs. May also play a role in the regulation of cytoplasmic mRNA decapping; enhances decapping of ARE-containing RNAs, in vitro. Involved in the delivery of target ARE-mRNAs to processing bodies (PBs). In addition to its cytosolic mRNA-decay function, affects nuclear pre-mRNA processing. Negatively regulates nuclear poly(A)-binding protein PABPN1-stimulated polyadenylation activity on ARE-containing pre-mRNA during LPS-stimulated macrophages. Also involved in the regulation of stress granule (SG) and P-body (PB) formation and fusion. Plays a role in the regulation of keratinocyte proliferation, differentiation and apoptosis. Plays a role as a tumor suppressor by inhibiting cell proliferation in breast cancer cells. (Microbial infection) Negatively regulates HTLV-1 TAX-dependent transactivation of viral long terminal repeat (LTR) promoter. This Homo sapiens (Human) protein is mRNA decay activator protein ZFP36.